Consider the following 64-residue polypeptide: Large ribosomal subunit protein uL29 (64 aa).

It belongs to the universal ribosomal protein uL29 family.

In Synechococcus elongatus (strain ATCC 33912 / PCC 7942 / FACHB-805) (Anacystis nidulans R2), this protein is Large ribosomal subunit protein uL29.